Reading from the N-terminus, the 121-residue chain is Ribonuclease P protein component (121 aa).

It belongs to the RnpA family. Consists of a catalytic RNA component (M1 or rnpB) and a protein subunit.

The enzyme catalyses Endonucleolytic cleavage of RNA, removing 5'-extranucleotides from tRNA precursor.. RNaseP catalyzes the removal of the 5'-leader sequence from pre-tRNA to produce the mature 5'-terminus. It can also cleave other RNA substrates such as 4.5S RNA. The protein component plays an auxiliary but essential role in vivo by binding to the 5'-leader sequence and broadening the substrate specificity of the ribozyme. This Erythrobacter litoralis (strain HTCC2594) protein is Ribonuclease P protein component.